We begin with the raw amino-acid sequence, 225 residues long: tRNA (guanine-N(7)-)-methyltransferase (225 aa).

4 residues coordinate S-adenosyl-L-methionine: Glu56, Glu81, Asp108, and Asp131. Asp131 is an active-site residue. Substrate-binding positions include Lys135, Asp167, and 204-207 (TKFE).

Belongs to the class I-like SAM-binding methyltransferase superfamily. TrmB family.

It catalyses the reaction guanosine(46) in tRNA + S-adenosyl-L-methionine = N(7)-methylguanosine(46) in tRNA + S-adenosyl-L-homocysteine. It functions in the pathway tRNA modification; N(7)-methylguanine-tRNA biosynthesis. Functionally, catalyzes the formation of N(7)-methylguanine at position 46 (m7G46) in tRNA. This Legionella pneumophila (strain Lens) protein is tRNA (guanine-N(7)-)-methyltransferase.